A 413-amino-acid polypeptide reads, in one-letter code: Divalent metal cation transporter MntH (413 aa).

A run of 11 helical transmembrane segments spans residues 19-39 (LALM…GNFA), 46-66 (ASFG…AMLI), 94-114 (VWFY…AEFI), 122-142 (LVLG…TFLI), 156-176 (VIGG…IFSQ), 196-216 (AVFL…IYLH), 241-261 (IAMT…AAAF), 290-310 (IFGL…TLAG), 329-349 (AITM…TRIL), 350-370 (VMSQ…LLIF), and 389-409 (IGWA…VGSL).

The protein belongs to the NRAMP family.

It localises to the cell inner membrane. In terms of biological role, h(+)-stimulated, divalent metal cation uptake system. The protein is Divalent metal cation transporter MntH of Klebsiella pneumoniae subsp. pneumoniae (strain ATCC 700721 / MGH 78578).